The chain runs to 344 residues: N-acetyl-gamma-glutamyl-phosphate reductase (344 aa).

The active site involves Cys-148.

The protein belongs to the NAGSA dehydrogenase family. Type 1 subfamily.

The protein localises to the cytoplasm. It catalyses the reaction N-acetyl-L-glutamate 5-semialdehyde + phosphate + NADP(+) = N-acetyl-L-glutamyl 5-phosphate + NADPH + H(+). Its pathway is amino-acid biosynthesis; L-arginine biosynthesis; N(2)-acetyl-L-ornithine from L-glutamate: step 3/4. In terms of biological role, catalyzes the NADPH-dependent reduction of N-acetyl-5-glutamyl phosphate to yield N-acetyl-L-glutamate 5-semialdehyde. The polypeptide is N-acetyl-gamma-glutamyl-phosphate reductase (Clostridium beijerinckii (strain ATCC 51743 / NCIMB 8052) (Clostridium acetobutylicum)).